Here is a 199-residue protein sequence, read N- to C-terminus: Ribonuclease HII (199 aa).

The 189-residue stretch at 11-199 (SRVAGVDEVG…RRSFLRRLLG (189 aa)) folds into the RNase H type-2 domain. 3 residues coordinate a divalent metal cation: D17, E18, and D113.

Belongs to the RNase HII family. Requires Mn(2+) as cofactor. It depends on Mg(2+) as a cofactor.

It localises to the cytoplasm. It catalyses the reaction Endonucleolytic cleavage to 5'-phosphomonoester.. Endonuclease that specifically degrades the RNA of RNA-DNA hybrids. The polypeptide is Ribonuclease HII (Synechococcus sp. (strain CC9902)).